The chain runs to 363 residues: Peptide chain release factor 1 (363 aa).

The residue at position 237 (Gln237) is an N5-methylglutamine.

The protein belongs to the prokaryotic/mitochondrial release factor family. In terms of processing, methylated by PrmC. Methylation increases the termination efficiency of RF1.

Its subcellular location is the cytoplasm. Its function is as follows. Peptide chain release factor 1 directs the termination of translation in response to the peptide chain termination codons UAG and UAA. The sequence is that of Peptide chain release factor 1 from Marinobacter nauticus (strain ATCC 700491 / DSM 11845 / VT8) (Marinobacter aquaeolei).